An 88-amino-acid chain; its full sequence is uncharacterized protein (88 aa).

This is an uncharacterized protein from Sinorhizobium fredii (strain NBRC 101917 / NGR234).